We begin with the raw amino-acid sequence, 254 residues long: Ribonuclease HII (254 aa).

In terms of domain architecture, RNase H type-2 spans 70–254 (TCIAGIDEAG…SFAPVKSVIS (185 aa)). Residues Asp76, Glu77, and Asp168 each contribute to the a divalent metal cation site.

It belongs to the RNase HII family. Requires Mn(2+) as cofactor. It depends on Mg(2+) as a cofactor.

It localises to the cytoplasm. It catalyses the reaction Endonucleolytic cleavage to 5'-phosphomonoester.. Its function is as follows. Endonuclease that specifically degrades the RNA of RNA-DNA hybrids. The sequence is that of Ribonuclease HII from Bacillus pumilus (strain SAFR-032).